The chain runs to 85 residues: UPF0291 protein SpyM3_1470 (85 aa).

Residues 62-85 (TPEKLRQVQREKGLHGRSLDDPKS) are disordered.

The protein belongs to the UPF0291 family.

The protein resides in the cytoplasm. The chain is UPF0291 protein SpyM3_1470 from Streptococcus pyogenes serotype M3 (strain ATCC BAA-595 / MGAS315).